A 383-amino-acid chain; its full sequence is uncharacterized protein (383 aa).

Residues 58–383 enclose the YcaO domain; that stretch reads GKGATRTQAR…RVGRRIRSSI (326 aa). The interval 80–100 is disordered; the sequence is AERKPEDETFTAHPEDCDGLD.

This is an uncharacterized protein from Methanothermobacter thermautotrophicus (strain ATCC 29096 / DSM 1053 / JCM 10044 / NBRC 100330 / Delta H) (Methanobacterium thermoautotrophicum).